The primary structure comprises 495 residues: Phage-like element PBSX protein XkdE (495 aa).

The protein belongs to the phage portal family. PBSX subfamily.

The polypeptide is Phage-like element PBSX protein XkdE (xkdE) (Bacillus subtilis (strain 168)).